Consider the following 142-residue polypeptide: Transcriptional regulator MraZ (142 aa).

2 SpoVT-AbrB domains span residues 5–51 (ASSL…PRPE) and 77–120 (AMDV…DKAT).

The protein belongs to the MraZ family. Forms oligomers.

It localises to the cytoplasm. The protein resides in the nucleoid. The sequence is that of Transcriptional regulator MraZ from Acidovorax ebreus (strain TPSY) (Diaphorobacter sp. (strain TPSY)).